The chain runs to 85 residues: Large ribosomal subunit protein bL27 (85 aa).

Over residues Met-1–Thr-10 the composition is skewed to gly residues. A disordered region spans residues Met-1 to Met-20.

The protein belongs to the bacterial ribosomal protein bL27 family.

The sequence is that of Large ribosomal subunit protein bL27 from Methylibium petroleiphilum (strain ATCC BAA-1232 / LMG 22953 / PM1).